Reading from the N-terminus, the 164-residue chain is ATP synthase subunit b (164 aa).

The chain crosses the membrane as a helical span at residues 6-26; the sequence is GELVGNFILVTGSVIVLLLLI.

This sequence belongs to the ATPase B chain family. F-type ATPases have 2 components, F(1) - the catalytic core - and F(0) - the membrane proton channel. F(1) has five subunits: alpha(3), beta(3), gamma(1), delta(1), epsilon(1). F(0) has three main subunits: a(1), b(2) and c(10-14). The alpha and beta chains form an alternating ring which encloses part of the gamma chain. F(1) is attached to F(0) by a central stalk formed by the gamma and epsilon chains, while a peripheral stalk is formed by the delta and b chains.

It localises to the cell membrane. Its function is as follows. F(1)F(0) ATP synthase produces ATP from ADP in the presence of a proton or sodium gradient. F-type ATPases consist of two structural domains, F(1) containing the extramembraneous catalytic core and F(0) containing the membrane proton channel, linked together by a central stalk and a peripheral stalk. During catalysis, ATP synthesis in the catalytic domain of F(1) is coupled via a rotary mechanism of the central stalk subunits to proton translocation. Functionally, component of the F(0) channel, it forms part of the peripheral stalk, linking F(1) to F(0). This chain is ATP synthase subunit b, found in Streptococcus pyogenes serotype M6 (strain ATCC BAA-946 / MGAS10394).